An 843-amino-acid polypeptide reads, in one-letter code: Pullulanase (843 aa).

An N-terminal signal peptide occupies residues M1–S19. D535 (nucleophile) is an active-site residue. The active-site Proton donor is E564.

It belongs to the glycosyl hydrolase 13 family.

The catalysed reaction is Hydrolysis of (1-&gt;6)-alpha-D-glucosidic linkages in pullulan, amylopectin and glycogen, and in the alpha- and beta-limit dextrins of amylopectin and glycogen.. The protein is Pullulanase (pulA) of Thermotoga maritima (strain ATCC 43589 / DSM 3109 / JCM 10099 / NBRC 100826 / MSB8).